A 709-amino-acid chain; its full sequence is Solute carrier organic anion transporter family member 2B1 (709 aa).

Residues 1–38 are disordered; it reads MGPRIGPAGEVPQVPDKETKATMGTENTPGGKASPDPQ. Residues 1-49 are Cytoplasmic-facing; sequence MGPRIGPAGEVPQVPDKETKATMGTENTPGGKASPDPQDVRPSVFHNIK. S34 is subject to Phosphoserine. The helical transmembrane segment at 50 to 69 threads the bilayer; it reads LFVLCHSLLQLAQLMISGYL. The required for E1S and taurocholate transport; required for transporter stability stretch occupies residues 51–69; it reads FVLCHSLLQLAQLMISGYL. At 70–88 the chain is on the extracellular side; the sequence is KSSISTVEKRFGLSSQTSG. Residues 89–109 traverse the membrane as a helical segment; sequence LLASFNEVGNTALIVFVSYFG. Residues 110-115 lie on the Cytoplasmic side of the membrane; sequence SRVHRP. A helical transmembrane segment spans residues 116 to 140; sequence RMIGYGAILVALAGLLMTLPHFISE. Topologically, residues 141–185 are extracellular; the sequence is PYRYDNTSPEDMPQDFKASLCLPTTSAPASAPSNGNCSSYTETQH. N176 carries an N-linked (GlcNAc...) asparagine glycan. Residues 186–215 traverse the membrane as a helical segment; that stretch reads LSVVGIMFVAQTLLGVGGVPIQPFGISYID. Residues 216 to 234 lie on the Cytoplasmic side of the membrane; that stretch reads DFAHNSNSPLYLGILFAVT. Residues 235 to 255 form a helical membrane-spanning segment; the sequence is MMGPGLAFGLGSLMLRLYVDI. Residues 256-273 are Extracellular-facing; it reads NQMPEGGISLTIKDPRWV. Residues 274–298 form a helical membrane-spanning segment; sequence GAWWLGFLIAAGAVALAAIPYFFFP. Over 299-366 the chain is Cytoplasmic; sequence KEMPKEKREL…IKVFPRVLLQ (68 aa). T318 carries the phosphothreonine modification. The segment at 319 to 342 is disordered; that stretch reads DSPARKGKDSPSKQSPGESTKKQD. S320 bears the Phosphoserine mark. The chain crosses the membrane as a helical span at residues 367–388; that stretch reads TLRHPIFLLVVLSQVCLSSMAA. Residues 389 to 408 lie on the Extracellular side of the membrane; sequence GMATFLPKFLERQFSITASY. The chain crosses the membrane as a helical span at residues 409–432; the sequence is ANLLIGCLSFPSVIVGIVVGGVLV. Residues 433–436 are Cytoplasmic-facing; that stretch reads KRLH. A helical transmembrane segment spans residues 437 to 460; that stretch reads LGPVGCGALCLLGMLLCLFFSLPL. Residues 461-564 are Extracellular-facing; sequence FFIGCSSHQI…STCSHLVVPF (104 aa). Residues 483 to 543 enclose the Kazal-like domain; the sequence is LELSPSCMEA…VFYTNCSCVV (61 aa). 3 disulfide bridges follow: C489–C520, C495–C516, and C504–C541. N-linked (GlcNAc...) asparagine glycosylation is present at N538. Residues 565 to 587 traverse the membrane as a helical segment; that stretch reads LLLVSLGSALACLTHTPSFMLIL. Residues 588-596 lie on the Cytoplasmic side of the membrane; that stretch reads RGVKKEDKT. The chain crosses the membrane as a helical span at residues 597–622; it reads LAVGIQFMFLRILAWMPSPVIHGSAI. Over 623-655 the chain is Extracellular; it reads DTTCVHWALSCGRRAVCRYYNNDLLRNRFIGLQ. The helical transmembrane segment at 656–673 threads the bilayer; that stretch reads FFFKTGSVICFALVLAVL. At 674–709 the chain is on the cytoplasmic side; the sequence is RQQDKEARTKESRSSPAVEQQLLVSGPGKKPEDSRV. Residues 679-709 form a disordered region; that stretch reads EARTKESRSSPAVEQQLLVSGPGKKPEDSRV.

Belongs to the organo anion transporter (TC 2.A.60) family. As to expression, strongly expressed in the liver, at the sinusoidal membrane of the hepatocytes. Expressed in the kidney. Expressed in placental trophoblasts and syncytiotrophoblast. Expressed in the small intestine. Expressed in the blood-brain barrier, in endothelial cells of brain capillaries. Expressed in the retina, in the inner nuclear layer and the inner plexiform layer. Expressed in skelettal muscles. In testis, primarily localized to the basal membrane of Sertoli cells and weakly expressed within the tubules. Also expressed in pancreas, lung, heart, colon, ovary and spleen. Expressed in fetal brain, heart, kidney, liver, lung, skeletal muscle, spleen and pancreas. In terms of tissue distribution, highest expression in brain. Predominant isoform compared to isoform 3 in small intestine duodenum, kidney, placenta, and skeletal muscle. Predominant isoform compared to isoform 1 in liver. Also expressed in small intestine duodenum, kidney, brain, placenta, and skeletal muscle.

The protein localises to the cell membrane. Its subcellular location is the basal cell membrane. It localises to the basolateral cell membrane. It is found in the apical cell membrane. It carries out the reaction dehydroepiandrosterone 3-sulfate(out) = dehydroepiandrosterone 3-sulfate(in). The enzyme catalyses estrone 3-sulfate(out) = estrone 3-sulfate(in). The catalysed reaction is estrone 3-sulfate(out) + hydrogencarbonate(in) = estrone 3-sulfate(in) + hydrogencarbonate(out). It catalyses the reaction taurocholate(out) = taurocholate(in). It carries out the reaction coproporphyrin III(out) = coproporphyrin III(in). The enzyme catalyses substance P(out) = substance P(in). The catalysed reaction is pregnenolone sulfate(out) = pregnenolone sulfate(in). It catalyses the reaction prostaglandin E2(out) = prostaglandin E2(in). It carries out the reaction prostaglandin D2(out) = prostaglandin D2(in). The enzyme catalyses L-thyroxine(out) = L-thyroxine(in). Its activity is regulated as follows. E1S, DHEA-S and PregS transports are regulated by steroid hormones. In the case of testosterone, transport of E1S and DHEA-S was inhibited, whereas progesterone stimulated E1S, DHEA-S and PregS uptake. Progesterone stimulates high-affinity uptake of E1S whereas it inhibits low-affinity uptake of E1S. Progesterone doesn't affect the uptake of PGE2. Its function is as follows. Mediates the Na(+)-independent transport of steroid sulfate conjugates and other specific organic anions. Responsible for the transport of estrone 3-sulfate (E1S) through the basal membrane of syncytiotrophoblast, highlighting a potential role in the placental absorption of fetal-derived sulfated steroids including the steroid hormone precursor dehydroepiandrosterone sulfate (DHEA-S). Also facilitates the uptake of sulfated steroids at the basal/sinusoidal membrane of hepatocytes, therefore accounting for the major part of organic anions clearance of liver. Mediates the intestinal uptake of sulfated steroids. Mediates the uptake of the neurosteroids DHEA-S and pregnenolone sulfate (PregS) into the endothelial cells of the blood-brain barrier as the first step to enter the brain. Also plays a role in the reuptake of neuropeptides such as substance P/TAC1 and vasoactive intestinal peptide/VIP released from retinal neurons. May act as a heme transporter that promotes cellular iron availability via heme oxygenase/HMOX2 and independently of TFRC. Also transports heme by-product coproporphyrin III (CPIII), and may be involved in their hepatic disposition. Mediates the uptake of other substrates such as prostaglandins D2 (PGD2), E1 (PGE1) and E2 (PGE2), taurocholate, L-thyroxine, leukotriene C4 and thromboxane B2. May contribute to regulate the transport of organic compounds in testis across the blood-testis-barrier. Shows a pH-sensitive substrate specificity which may be ascribed to the protonation state of the binding site and leads to a stimulation of substrate transport in an acidic microenvironment. The exact transport mechanism has not been yet deciphered but most likely involves an anion exchange, coupling the cellular uptake of organic substrate with the efflux of an anionic compound. Hydrogencarbonate/HCO3(-) acts as a probable counteranion that exchanges for organic anions. Cytoplasmic glutamate may also act as counteranion in the placenta. An inwardly directed proton gradient has also been proposed as the driving force of E1S uptake with a (H(+):E1S) stoichiometry of (1:1). In terms of biological role, has estrone 3-sulfate (E1S) transport activity comparable with the full-length isoform 1. The protein is Solute carrier organic anion transporter family member 2B1 of Homo sapiens (Human).